A 146-amino-acid chain; its full sequence is Hemoglobin subunit beta (146 aa).

Valine 1 carries the post-translational modification N-acetylvaline. The Globin domain maps to 2–146 (HLTGEEKAAV…VANALAHKYH (145 aa)). Threonine 12 is modified (phosphothreonine). Serine 44 carries the post-translational modification Phosphoserine. An N6-acetyllysine modification is found at lysine 59. Histidine 63 serves as a coordination point for heme b. Lysine 82 carries the N6-acetyllysine modification. Histidine 92 serves as a coordination point for heme b. Residue cysteine 93 is modified to S-nitrosocysteine. Lysine 144 bears the N6-acetyllysine mark.

It belongs to the globin family. Heterotetramer of two alpha chains and two beta chains. Red blood cells.

Functionally, involved in oxygen transport from the lung to the various peripheral tissues. This Lutra lutra (European river otter) protein is Hemoglobin subunit beta (HBB).